A 566-amino-acid chain; its full sequence is Beta-1,2-xylosyltransferease XAX1 (566 aa).

Residues 1-25 (MTSTAYSRPSKLPGGGNGSDRRLPP) are disordered. Over 1-43 (MTSTAYSRPSKLPGGGNGSDRRLPPRLMRGLTTKIEPKKLGVG) the chain is Cytoplasmic. Residues 44–64 (LLAGCCLALLTYVSLAKLFAI) form a helical; Signal-anchor for type II membrane protein membrane-spanning segment. Over 65 to 566 (YSPVFASTAN…LLQALDRLQQ (502 aa)) the chain is Lumenal. The N-linked (GlcNAc...) asparagine glycan is linked to N74. The interval 78-180 (LMQNSPPSSP…AAGGDTKIKC (103 aa)) is disordered. The span at 84-94 (PSSPETGPIPP) shows a compositional bias: pro residues. N-linked (GlcNAc...) asparagine glycans are attached at residues N104, N368, N429, N515, and N549.

This sequence belongs to the glycosyltransferase 61 family. Highly expressed in young panicles.

It is found in the golgi apparatus membrane. It functions in the pathway glycan metabolism. Its function is as follows. Glycosyltransferase involved in the xylosylation of xylan, the major hemicellulose (non-cellulosic component) of primary and secondary walls of angiosperms. Possesses beta-1,2-xylosyltransferase activity, transferring xylose from UDP-xylose to the xylan backbone. The sequence is that of Beta-1,2-xylosyltransferease XAX1 from Oryza sativa subsp. japonica (Rice).